We begin with the raw amino-acid sequence, 616 residues long: Replication protein A 70 kDa DNA-binding subunit (616 aa).

Methionine 1 carries the post-translational modification N-acetylmethionine. Residues lysine 22 and lysine 88 each participate in a glycyl lysine isopeptide (Lys-Gly) (interchain with G-Cter in ubiquitin) cross-link. The tract at residues 121–154 (GLGQPQVAPPAPAASPAASSRPQPQNGSSGMGST) is disordered. Residues 134-145 (ASPAASSRPQPQ) show a composition bias toward low complexity. N6-acetyllysine; alternate occurs at positions 163 and 167. Residues lysine 163 and lysine 167 each participate in a glycyl lysine isopeptide (Lys-Gly) (interchain with G-Cter in ubiquitin); alternate cross-link. A Phosphothreonine modification is found at threonine 180. Residue lysine 183 forms a Glycyl lysine isopeptide (Lys-Gly) (interchain with G-Cter in ubiquitin) linkage. Phosphothreonine is present on threonine 191. Positions 197–281 (WTICARVTNK…VKNDYEMTFN (85 aa)) form a DNA-binding region, OB. Residues lysine 220 and lysine 244 each participate in a glycyl lysine isopeptide (Lys-Gly) (interchain with G-Cter in ubiquitin) cross-link. Lysine 259 is modified (N6-acetyllysine; alternate). Lysine 259 participates in a covalent cross-link: Glycyl lysine isopeptide (Lys-Gly) (interchain with G-Cter in ubiquitin); alternate. Residues lysine 267 and lysine 331 each participate in a glycyl lysine isopeptide (Lys-Gly) (interchain with G-Cter in ubiquitin) cross-link. Serine 384 carries the post-translational modification Phosphoserine. Residues lysine 410 and lysine 431 each participate in a glycyl lysine isopeptide (Lys-Gly) (interchain with G-Cter in ubiquitin) cross-link. Lysine 449 is covalently cross-linked (Glycyl lysine isopeptide (Lys-Gly) (interchain with G-Cter in SUMO)). Residue lysine 458 forms a Glycyl lysine isopeptide (Lys-Gly) (interchain with G-Cter in ubiquitin) linkage. A C4-type zinc finger spans residues 481–503 (CPTQDCNKKVIDQQNGLYRCEKC). Lysine 553 is covalently cross-linked (Glycyl lysine isopeptide (Lys-Gly) (interchain with G-Cter in ubiquitin)). Residue lysine 577 forms a Glycyl lysine isopeptide (Lys-Gly) (interchain with G-Cter in SUMO) linkage.

It belongs to the replication factor A protein 1 family. Component of the canonical replication protein A complex (RPA), a heterotrimer composed of RPA1, RPA2 and RPA3. Also a component of the aRPA, the alternative replication protein A complex, a trimeric complex similar to the replication protein A complex/RPA but where RPA1 and RPA3 are associated with RPA4 instead of RPA2. The DNA-binding activity may reside exclusively on the RPA1 subunit. Interacts with PRPF19; the PRP19-CDC5L complex is recruited to the sites of DNA repair where it ubiquitinates the replication protein A complex (RPA). Interacts with RIPK1. Interacts with the polymerase alpha subunit POLA1/p180; this interaction stabilizes the replicative complex and reduces the misincorporation rate of DNA polymerase alpha by acting as a fidelity clamp. Interacts with RAD51 and SENP6 to regulate DNA repair. Interacts with HELB; this interaction promotes HELB recruitment to chromatin following DNA damage. Interacts with PRIMPOL; leading to recruit PRIMPOL on chromatin and stimulate its DNA primase activity. Interacts with XPA; the interaction is direct and associates XPA with the RPA complex. Interacts with ETAA1; the interaction is direct and promotes ETAA1 recruitment at stalled replication forks. Interacts with RPA1; this interaction associates HROB with the RPA complex. Interacts (when poly-ADP-ribosylated) with HTATSF1. Interacts with BRIP1/FANCJ via this RPA1 subunit; following DNA damage they colocalize in foci in the nucleus. DNA damage-induced 'Lys-63'-linked polyubiquitination by PRPF19 mediates ATRIP recruitment to the RPA complex at sites of DNA damage and activation of ATR. Ubiquitinated by RFWD3 at stalled replication forks in response to DNA damage: ubiquitination by RFWD3 does not lead to degradation by the proteasome and promotes removal of the RPA complex from stalled replication forks, promoting homologous recombination. Post-translationally, sumoylated on lysine residues Lys-449 and Lys-577, with Lys-449 being the major site. Sumoylation promotes recruitment of RAD51 to the DNA damage foci to initiate DNA repair through homologous recombination. Desumoylated by SENP6. In terms of processing, poly-ADP-ribosylated by PARP1; promoting recruitment of HTATSF1.

The protein localises to the nucleus. Its subcellular location is the PML body. In terms of biological role, as part of the heterotrimeric replication protein A complex (RPA/RP-A), binds and stabilizes single-stranded DNA intermediates that form during DNA replication or upon DNA stress. It prevents their reannealing and in parallel, recruits and activates different proteins and complexes involved in DNA metabolism. Thereby, it plays an essential role both in DNA replication and the cellular response to DNA damage. In the cellular response to DNA damage, the RPA complex controls DNA repair and DNA damage checkpoint activation. Through recruitment of ATRIP activates the ATR kinase a master regulator of the DNA damage response. It is required for the recruitment of the DNA double-strand break repair factors RAD51 and RAD52 to chromatin in response to DNA damage. Also recruits to sites of DNA damage proteins like XPA and XPG that are involved in nucleotide excision repair and is required for this mechanism of DNA repair. Also plays a role in base excision repair (BER) probably through interaction with UNG. Also recruits SMARCAL1/HARP, which is involved in replication fork restart, to sites of DNA damage. Plays a role in telomere maintenance. As part of the alternative replication protein A complex, aRPA, binds single-stranded DNA and probably plays a role in DNA repair. Compared to the RPA2-containing, canonical RPA complex, may not support chromosomal DNA replication and cell cycle progression through S-phase. The aRPA may not promote efficient priming by DNA polymerase alpha but could support DNA synthesis by polymerase delta in presence of PCNA and replication factor C (RFC), the dual incision/excision reaction of nucleotide excision repair and RAD51-dependent strand exchange. RPA stimulates 5'-3' helicase activity of the BRIP1/FANCJ. The protein is Replication protein A 70 kDa DNA-binding subunit (RPA1) of Homo sapiens (Human).